We begin with the raw amino-acid sequence, 433 residues long: UPF0597 protein Spea_0809 (433 aa).

The protein belongs to the UPF0597 family.

This Shewanella pealeana (strain ATCC 700345 / ANG-SQ1) protein is UPF0597 protein Spea_0809.